Here is a 166-residue protein sequence, read N- to C-terminus: Regulator of ribonuclease activity A (166 aa).

The protein belongs to the RraA family. Homotrimer. Binds to both RNA-binding sites in the C-terminal region of Rne and to RhlB.

Its subcellular location is the cytoplasm. Globally modulates RNA abundance by binding to RNase E (Rne) and regulating its endonucleolytic activity. Can modulate Rne action in a substrate-dependent manner by altering the composition of the degradosome. Modulates RNA-binding and helicase activities of the degradosome. This chain is Regulator of ribonuclease activity A, found in Histophilus somni (strain 2336) (Haemophilus somnus).